Here is a 100-residue protein sequence, read N- to C-terminus: MAKKSLIYREKKRQKLEKKYHLIRRSSKKEISQIPSLSEKWKIHGKLQSPPRNSAPTRLHRRCFSTGRPRANYRDFGLSGHILREMVQACLLPGATRSSW.

It belongs to the universal ribosomal protein uS14 family. Part of the 30S ribosomal subunit.

It localises to the plastid. Its subcellular location is the chloroplast. Functionally, binds 16S rRNA, required for the assembly of 30S particles. This Lepidium virginicum (Virginia pepperweed) protein is Small ribosomal subunit protein uS14c.